A 370-amino-acid chain; its full sequence is Probable butyrate kinase (370 aa).

It belongs to the acetokinase family.

The protein localises to the cytoplasm. It catalyses the reaction butanoate + ATP = butanoyl phosphate + ADP. In Elusimicrobium minutum (strain Pei191), this protein is Probable butyrate kinase.